A 504-amino-acid polypeptide reads, in one-letter code: ATP synthase subunit alpha, chloroplastic (504 aa).

170 to 177 (GDRQTGKT) contributes to the ATP binding site.

Belongs to the ATPase alpha/beta chains family. As to quaternary structure, F-type ATPases have 2 components, CF(1) - the catalytic core - and CF(0) - the membrane proton channel. CF(1) has five subunits: alpha(3), beta(3), gamma(1), delta(1), epsilon(1). CF(0) has four main subunits: a, b, b' and c.

The protein resides in the plastid. The protein localises to the chloroplast thylakoid membrane. It catalyses the reaction ATP + H2O + 4 H(+)(in) = ADP + phosphate + 5 H(+)(out). Its function is as follows. Produces ATP from ADP in the presence of a proton gradient across the membrane. The alpha chain is a regulatory subunit. The protein is ATP synthase subunit alpha, chloroplastic of Hordeum vulgare (Barley).